Here is a 138-residue protein sequence, read N- to C-terminus: Probable prefoldin subunit 4 (138 aa).

Belongs to the prefoldin subunit beta family. In terms of assembly, heterohexamer of two PFD-alpha type and four PFD-beta type subunits.

Functionally, binds specifically to cytosolic chaperonin (c-CPN) and transfers target proteins to it. Binds to nascent polypeptide chain and promotes folding in an environment in which there are many competing pathways for nonnative proteins. This is Probable prefoldin subunit 4 from Drosophila melanogaster (Fruit fly).